The following is a 311-amino-acid chain: Beta-lactamase (311 aa).

The tat-type signal signal peptide spans 1–36; it reads MRKPTSSLTRRSVLGAGLGLGGALALGSTTASAASA. Ser86 serves as the catalytic Acyl-ester intermediate. 252 to 254 contributes to the substrate binding site; sequence KSG.

Belongs to the class-A beta-lactamase family. Predicted to be exported by the Tat system. The position of the signal peptide cleavage has not been experimentally proven.

The enzyme catalyses a beta-lactam + H2O = a substituted beta-amino acid. Hydrolyzes benzylpenicillin and cloxacillin (at 10% of the rate of benzylpenicillin). This is Beta-lactamase (bla) from Streptomyces cellulosae.